A 530-amino-acid polypeptide reads, in one-letter code: Chondroitin sulfate N-acetylgalactosaminyltransferase 1 (530 aa).

Residues methionine 1 to arginine 12 are Cytoplasmic-facing. A helical; Signal-anchor for type II membrane protein transmembrane segment spans residues valine 13–threonine 33. Topologically, residues proline 34–threonine 530 are lumenal. A coiled-coil region spans residues alanine 57–serine 93. Residues serine 88–glycine 107 form a disordered region. Polar residues predominate over residues phenylalanine 91–arginine 105. Residues asparagine 313 and asparagine 322 are each glycosylated (N-linked (GlcNAc...) asparagine). A divalent metal cation-binding residues include aspartate 358 and histidine 475.

It belongs to the chondroitin N-acetylgalactosaminyltransferase family.

It is found in the golgi apparatus. It localises to the golgi stack membrane. The enzyme catalyses 3-O-(beta-D-GlcA-(1-&gt;3)-beta-D-Gal-(1-&gt;3)-beta-D-Gal-(1-&gt;4)-beta-D-Xyl)-L-seryl-[protein] + UDP-N-acetyl-alpha-D-galactosamine = 3-O-(beta-D-GalNAc-(1-&gt;4)-beta-D-GlcA-(1-&gt;3)-beta-D-Gal-(1-&gt;3)-beta-D-Gal-(1-&gt;4)-beta-D-Xyl)-L-seryl-[protein] + UDP + H(+). Transfers 1,4-N-acetylgalactosamine (GalNAc) from UDP-GalNAc to the non-reducing end of glucuronic acid (GlcUA). Required for addition of the first GalNAc to the core tetrasaccharide linker and for elongation of chondroitin chains. Important role in chondroitin chain biosynthesis in cartilage formation, and subsequent endochondral ossification. Moreover, is involved in the metabolism of aggrecan. In Mus musculus (Mouse), this protein is Chondroitin sulfate N-acetylgalactosaminyltransferase 1.